A 244-amino-acid chain; its full sequence is tRNA pseudouridine synthase A (244 aa).

Residue Asp52 is the Nucleophile of the active site. Tyr110 contacts substrate.

It belongs to the tRNA pseudouridine synthase TruA family. Homodimer.

It catalyses the reaction uridine(38/39/40) in tRNA = pseudouridine(38/39/40) in tRNA. Functionally, formation of pseudouridine at positions 38, 39 and 40 in the anticodon stem and loop of transfer RNAs. This Finegoldia magna (strain ATCC 29328 / DSM 20472 / WAL 2508) (Peptostreptococcus magnus) protein is tRNA pseudouridine synthase A.